Reading from the N-terminus, the 1417-residue chain is DNA-directed RNA polymerase subunit beta' (1417 aa).

Zn(2+) is bound by residues cysteine 71, cysteine 73, cysteine 86, and cysteine 89. The Mg(2+) site is built by aspartate 461, aspartate 463, and aspartate 465. Positions 815, 889, 896, and 899 each coordinate Zn(2+).

This sequence belongs to the RNA polymerase beta' chain family. As to quaternary structure, the RNAP catalytic core consists of 2 alpha, 1 beta, 1 beta' and 1 omega subunit. When a sigma factor is associated with the core the holoenzyme is formed, which can initiate transcription. The cofactor is Mg(2+). It depends on Zn(2+) as a cofactor.

It carries out the reaction RNA(n) + a ribonucleoside 5'-triphosphate = RNA(n+1) + diphosphate. Functionally, DNA-dependent RNA polymerase catalyzes the transcription of DNA into RNA using the four ribonucleoside triphosphates as substrates. This chain is DNA-directed RNA polymerase subunit beta', found in Pasteurella multocida (strain Pm70).